The following is a 126-amino-acid chain: MLTDPIADMLTRIRNAHLALHKEVSVPRSKMKESLAAILKQEGYIEDVATEEGSIKLTLKYFKGKPVISGLKRVSKPGRRVYVGMHEIPKVQNGLGICILSTSRGVMDGNSAHESKVGGELLCEIW.

Belongs to the universal ribosomal protein uS8 family. Part of the 30S ribosomal subunit. Contacts proteins S5 and S12.

Its function is as follows. One of the primary rRNA binding proteins, it binds directly to 16S rRNA central domain where it helps coordinate assembly of the platform of the 30S subunit. The chain is Small ribosomal subunit protein uS8 from Nitratidesulfovibrio vulgaris (strain ATCC 29579 / DSM 644 / CCUG 34227 / NCIMB 8303 / VKM B-1760 / Hildenborough) (Desulfovibrio vulgaris).